Here is a 206-residue protein sequence, read N- to C-terminus: Cytidylate kinase (206 aa).

9-17 (GPAAAGKGT) provides a ligand contact to ATP.

Belongs to the cytidylate kinase family. Type 1 subfamily.

The protein localises to the cytoplasm. It carries out the reaction CMP + ATP = CDP + ADP. The enzyme catalyses dCMP + ATP = dCDP + ADP. This Cereibacter sphaeroides (strain ATCC 17023 / DSM 158 / JCM 6121 / CCUG 31486 / LMG 2827 / NBRC 12203 / NCIMB 8253 / ATH 2.4.1.) (Rhodobacter sphaeroides) protein is Cytidylate kinase.